The sequence spans 400 residues: Zinc finger CCHC domain-containing protein 3 (400 aa).

The segment at 1 to 157 is disordered; the sequence is MATGGGAEEE…LQDEPPAAGP (157 aa). Composition is skewed to basic and acidic residues over residues 26 to 38 and 47 to 63; these read ARVE…REKM and LAEK…RDET. A compositionally biased stretch (gly residues) spans 66-75; it reads GASGGLGSPG. Residues 91–109 show a composition bias toward basic and acidic residues; sequence GDPKGRRRDPTGEASDAYR. At Tyr198 the chain carries Phosphotyrosine. 2 consecutive CCHC-type zinc fingers follow at residues 349–365 and 369–384; these read RCFR…YCRK and CNLC…QCPK.

Interacts with CGAS. Interacts with RIGI. Interacts with IFIH1/MDA5.

It is found in the cytoplasm. Nucleic acid-binding protein involved in innate immune response to DNA and RNA viruses. Binds DNA and RNA in the cytoplasm and acts by promoting recognition of viral nucleic acids by virus sensors, such as RIGI, IFIH1/MDA5 and CGAS. Acts as a co-sensor for recognition of double-stranded DNA (dsDNA) by cGAS in the cytoplasm, thereby playing a role in innate immune response to cytosolic dsDNA and DNA virus. Binds dsDNA and probably acts by promoting sensing of dsDNA by CGAS, leading to enhance CGAS oligomerization and activation. Promotes sensing of viral RNA by RIG-I-like receptors proteins RIGI and IFIH1/MDA5 via two mechanisms: binds double-stranded RNA (dsRNA), enhancing the binding of RIGI and IFIH1/MDA5 to dsRNA and promotes 'Lys-63'-linked ubiquitination and subsequent activation of RIGI and IFIH1/MDA5. This chain is Zinc finger CCHC domain-containing protein 3, found in Mus musculus (Mouse).